A 290-amino-acid chain; its full sequence is Acetyl-coenzyme A carboxylase carboxyl transferase subunit beta (290 aa).

Residues 27-290 form the CoA carboxyltransferase N-terminal domain; that stretch reads LWHKCPSCEA…FTHSPSPVSA (264 aa). The Zn(2+) site is built by cysteine 31, cysteine 34, cysteine 50, and cysteine 53. A C4-type zinc finger spans residues 31 to 53; the sequence is CPSCEAVLYRPELEKTLDVCPKC.

Belongs to the AccD/PCCB family. In terms of assembly, acetyl-CoA carboxylase is a heterohexamer composed of biotin carboxyl carrier protein (AccB), biotin carboxylase (AccC) and two subunits each of ACCase subunit alpha (AccA) and ACCase subunit beta (AccD). The cofactor is Zn(2+).

It localises to the cytoplasm. It carries out the reaction N(6)-carboxybiotinyl-L-lysyl-[protein] + acetyl-CoA = N(6)-biotinyl-L-lysyl-[protein] + malonyl-CoA. Its pathway is lipid metabolism; malonyl-CoA biosynthesis; malonyl-CoA from acetyl-CoA: step 1/1. Functionally, component of the acetyl coenzyme A carboxylase (ACC) complex. Biotin carboxylase (BC) catalyzes the carboxylation of biotin on its carrier protein (BCCP) and then the CO(2) group is transferred by the transcarboxylase to acetyl-CoA to form malonyl-CoA. This is Acetyl-coenzyme A carboxylase carboxyl transferase subunit beta from Pseudomonas paraeruginosa (strain DSM 24068 / PA7) (Pseudomonas aeruginosa (strain PA7)).